A 310-amino-acid polypeptide reads, in one-letter code: Methionyl-tRNA formyltransferase (310 aa).

Position 114-117 (114-117) interacts with (6S)-5,6,7,8-tetrahydrofolate; sequence SLLP.

Belongs to the Fmt family.

It carries out the reaction L-methionyl-tRNA(fMet) + (6R)-10-formyltetrahydrofolate = N-formyl-L-methionyl-tRNA(fMet) + (6S)-5,6,7,8-tetrahydrofolate + H(+). Functionally, attaches a formyl group to the free amino group of methionyl-tRNA(fMet). The formyl group appears to play a dual role in the initiator identity of N-formylmethionyl-tRNA by promoting its recognition by IF2 and preventing the misappropriation of this tRNA by the elongation apparatus. This Granulibacter bethesdensis (strain ATCC BAA-1260 / CGDNIH1) protein is Methionyl-tRNA formyltransferase.